The chain runs to 249 residues: 4-hydroxy-tetrahydrodipicolinate reductase (249 aa).

NAD(+)-binding positions include aspartate 32, 74–76, and 99–102; these read GTT and SANY. Histidine 134 functions as the Proton donor/acceptor in the catalytic mechanism. Histidine 135 is a binding site for (S)-2,3,4,5-tetrahydrodipicolinate. Lysine 138 acts as the Proton donor in catalysis. 144–145 provides a ligand contact to (S)-2,3,4,5-tetrahydrodipicolinate; the sequence is GT.

This sequence belongs to the DapB family.

It is found in the cytoplasm. The enzyme catalyses (S)-2,3,4,5-tetrahydrodipicolinate + NAD(+) + H2O = (2S,4S)-4-hydroxy-2,3,4,5-tetrahydrodipicolinate + NADH + H(+). It catalyses the reaction (S)-2,3,4,5-tetrahydrodipicolinate + NADP(+) + H2O = (2S,4S)-4-hydroxy-2,3,4,5-tetrahydrodipicolinate + NADPH + H(+). The protein operates within amino-acid biosynthesis; L-lysine biosynthesis via DAP pathway; (S)-tetrahydrodipicolinate from L-aspartate: step 4/4. Functionally, catalyzes the conversion of 4-hydroxy-tetrahydrodipicolinate (HTPA) to tetrahydrodipicolinate. This Chlorobaculum tepidum (strain ATCC 49652 / DSM 12025 / NBRC 103806 / TLS) (Chlorobium tepidum) protein is 4-hydroxy-tetrahydrodipicolinate reductase.